Here is a 108-residue protein sequence, read N- to C-terminus: UPF0060 membrane protein YnfA (108 aa).

Topologically, residues 1–5 (MFKTT) are periplasmic. The helical transmembrane segment at 6 to 26 (LLFFITALCEIIGCFLPWLWL) threads the bilayer. At 27 to 30 (KRNG) the chain is on the cytoplasmic side. A helical transmembrane segment spans residues 31–51 (SIWLLLPAGVSLAFFVWLLTL). Residues 52-60 (HPAASGRVY) lie on the Periplasmic side of the membrane. Residues 61-81 (AAYGGVYVCTALLWLRFIDGV) form a helical membrane-spanning segment. At 82–84 (KLS) the chain is on the cytoplasmic side. The chain crosses the membrane as a helical span at residues 85–105 (LYDWSGALIALCGMLIIVAGW). Over 106-108 (GRA) the chain is Periplasmic.

It belongs to the UPF0060 family.

It is found in the cell inner membrane. The polypeptide is UPF0060 membrane protein YnfA (Escherichia fergusonii (strain ATCC 35469 / DSM 13698 / CCUG 18766 / IAM 14443 / JCM 21226 / LMG 7866 / NBRC 102419 / NCTC 12128 / CDC 0568-73)).